The primary structure comprises 505 residues: MATPSNKRSRDSESTEEPVVDEKSTSKQNNAAPEGEQTTCVEKFEELKLSQPTLKAIEKMGFTTMTSVQARTIPPLLAGRDVLGAAKTGSGKTLAFLIPAIELLHSLKFKPRNGTGIIVITPTRELALQIFGVARELMEFHSQTFGIVIGGANRRQEAEKLMKGVNMLIATPGRLLDHLQNTKGFVFKNLKALIIDEADRILEIGFEDEMRQIIKILPNEDRQSMLFSATQTTKVEDLARISLRPGPLFINVVPETDNSTADGLEQGYVVCDSDKRFLLLFSFLKRNQKKKIIVFLSSCNSVKYYAELLNYIDLPVLELHGKQKQQKRTNTFFEFCNAERGILICTDVAARGLDIPAVDWIIQFDPPDDPRDYIHRVGRTARGTKGKGKSLMFLTPNELGFLRYLKASKVPLNEYEFPENKIANVQSQLEKLIKSNYYLHQTAKDGYRSYLQAYASHSLKTVYQIDKLDLAKVAKSYGFPVPPKVNITIGASGKTPNTKRRKTHK.

The disordered stretch occupies residues 1–37 (MATPSNKRSRDSESTEEPVVDEKSTSKQNNAAPEGEQ). Ser12 carries the post-translational modification Phosphoserine. Polar residues predominate over residues 26 to 37 (SKQNNAAPEGEQ). A Q motif motif is present at residues 42–70 (EKFEELKLSQPTLKAIEKMGFTTMTSVQA). Residues 73–249 (IPPLLAGRDV…RISLRPGPLF (177 aa)) enclose the Helicase ATP-binding domain. 86–93 (AKTGSGKT) serves as a coordination point for ATP. Positions 196–199 (DEAD) match the DEAD box motif. The Helicase C-terminal domain maps to 263–433 (GLEQGYVVCD…NVQSQLEKLI (171 aa)). The Bipartite nuclear localization signal signature appears at 275–291 (KRFLLLFSFLKRNQKKK).

It belongs to the DEAD box helicase family. DDX18/HAS1 subfamily. As to quaternary structure, interacts with RRP1. Associates in the nucleolus with the 60S and pre-60S ribosomal subunits. It has also been isolated with the nuclear pore complex. Post-translationally, phosphorylated by CDK1.

The protein localises to the nucleus. It is found in the nucleolus. It catalyses the reaction ATP + H2O = ADP + phosphate + H(+). Its function is as follows. ATP-dependent RNA helicase involved in 40S ribosomal subunit biogenesis. Required for the processing and cleavage of 35S pre-rRNA at sites A0, A1, and A2, leading to mature 18S rRNA. In Saccharomyces cerevisiae (strain ATCC 204508 / S288c) (Baker's yeast), this protein is ATP-dependent RNA helicase HAS1 (HAS1).